A 495-amino-acid polypeptide reads, in one-letter code: Glutelin type-B 2 (495 aa).

Residues 1-24 (MATTIFSRFSIYFCAMLLCQGSMA) form the signal peptide. Disulfide bonds link Cys45/Cys78 and Cys121/Cys305. 2 consecutive Cupin type-1 domains span residues 50–245 (LQAF…VAAK) and 311–460 (VNIE…EQAR). The segment at 464–495 (NNRGEEHGAFTPRFQQQYYPGFSNESESETSE) is disordered.

It belongs to the 11S seed storage protein (globulins) family. In terms of assembly, hexamer; each subunit is composed of an acidic and a basic chain derived from a single precursor and linked by a disulfide bond.

Its function is as follows. Seed storage protein. This chain is Glutelin type-B 2 (GLUB2), found in Oryza sativa subsp. japonica (Rice).